A 766-amino-acid polypeptide reads, in one-letter code: FYVE, RhoGEF and PH domain-containing protein 4 (766 aa).

Disordered stretches follow at residues 1 to 20 (MEEI…PSKV), 46 to 83 (NLNA…DKTQ), and 134 to 188 (ETAT…ESPL). The interval 1–150 (MEEIKPASAS…SPTTDSCDGN (150 aa)) is actin filament-binding. Composition is skewed to polar residues over residues 58–83 (LTTT…DKTQ) and 145–157 (DSCD…SSYR). A compositionally biased stretch (basic and acidic residues) spans 167–184 (LEERGAETETKVQERENG). The 188-residue stretch at 206–393 (KLHKIANELL…STAASHSNSA (188 aa)) folds into the DH domain. In terms of domain architecture, PH 1 spans 422–521 (ELIKEGQILK…WIKALQETID (100 aa)). Residues 559-619 (DNEVTMCMKC…VCKDCYQIIS (61 aa)) form an FYVE-type zinc finger. Cysteine 565, cysteine 568, cysteine 582, cysteine 585, cysteine 590, cysteine 593, cysteine 611, and cysteine 614 together coordinate Zn(2+). One can recognise a PH 2 domain in the interval 643–740 (NSVVCSFLQY…WLKVILLAVT (98 aa)). A phosphoserine mark is found at serine 702 and serine 716. The disordered stretch occupies residues 742–766 (ETPGGPNEHPATLDDHPEPKKKSEC). Residues 752-766 (ATLDDHPEPKKKSEC) show a composition bias toward basic and acidic residues.

Homooligomer. As to expression, expressed in different tissues, including brain, cerebellum, peripheral nerve, skeletal muscle, heart, uterus, placenta and testis.

It localises to the cytoplasm. The protein localises to the cytoskeleton. Its subcellular location is the cell projection. The protein resides in the filopodium. Activates CDC42, a member of the Ras-like family of Rho- and Rac proteins, by exchanging bound GDP for free GTP. Plays a role in regulating the actin cytoskeleton and cell shape. Activates MAPK8. This chain is FYVE, RhoGEF and PH domain-containing protein 4 (FGD4), found in Homo sapiens (Human).